A 150-amino-acid polypeptide reads, in one-letter code: Large ribosomal subunit protein bL9 (150 aa).

Belongs to the bacterial ribosomal protein bL9 family.

Its function is as follows. Binds to the 23S rRNA. This Polaromonas sp. (strain JS666 / ATCC BAA-500) protein is Large ribosomal subunit protein bL9.